The following is a 543-amino-acid chain: Phosphoribosylaminoimidazole carboxylase (543 aa).

One can recognise an ATP-grasp domain in the interval 110-297 (KEHLIKNGIA…QFEAHVRAIT (188 aa)). Residue 137-192 (GAKYGFPYMLKSRTMAYDGRGNFVVKDKSYIPEALKVLDDRPLYAEKWAPFSKELA) participates in ATP binding.

The protein in the C-terminal section; belongs to the AIR carboxylase family. Class I subfamily.

It catalyses the reaction 5-amino-1-(5-phospho-D-ribosyl)imidazole-4-carboxylate + H(+) = 5-amino-1-(5-phospho-beta-D-ribosyl)imidazole + CO2. It functions in the pathway purine metabolism; IMP biosynthesis via de novo pathway; 5-amino-1-(5-phospho-D-ribosyl)imidazole-4-carboxylate from 5-amino-1-(5-phospho-D-ribosyl)imidazole (carboxylase route): step 1/1. The chain is Phosphoribosylaminoimidazole carboxylase (ADE1) from Ogataea methanolica (Yeast).